A 686-amino-acid polypeptide reads, in one-letter code: tRNA wybutosine-synthesizing protein 4 (686 aa).

Residues 1 to 22 (MGPRSRQRRTGTVQSTNDSSSL) are disordered. Polar residues predominate over residues 10–22 (TGTVQSTNDSSSL). S-adenosyl-L-methionine contacts are provided by residues arginine 59, glycine 89, aspartate 114, 161 to 162 (DL), and glutamate 188.

Belongs to the methyltransferase superfamily. LCMT family. In terms of assembly, interacts with RNF144B/IBRDC2.

The catalysed reaction is 7-[(3S)-3-amino-3-carboxypropyl]wyosine(37) in tRNA(Phe) + S-adenosyl-L-methionine = 7-[(3S)-(3-amino-3-methoxycarbonyl)propyl]wyosine(37) in tRNA(Phe) + S-adenosyl-L-homocysteine. It carries out the reaction 7-[(3S)-(3-amino-3-methoxycarbonyl)propyl]wyosine(37) in tRNA(Phe) + S-adenosyl-L-methionine + CO2 = wybutosine(37) in tRNA(Phe) + S-adenosyl-L-homocysteine + 2 H(+). Its pathway is tRNA modification; wybutosine-tRNA(Phe) biosynthesis. Its function is as follows. Probable S-adenosyl-L-methionine-dependent methyltransferase that acts as a component of the wybutosine biosynthesis pathway. Wybutosine is a hyper modified guanosine with a tricyclic base found at the 3'-position adjacent to the anticodon of eukaryotic phenylalanine tRNA. May methylate the carboxyl group of leucine residues to form alpha-leucine ester residues. The polypeptide is tRNA wybutosine-synthesizing protein 4 (Lcmt2) (Rattus norvegicus (Rat)).